The following is a 406-amino-acid chain: Imidazolonepropionase (406 aa).

Positions 67 and 69 each coordinate Fe(3+). Positions 67 and 69 each coordinate Zn(2+). Residues Arg76, Tyr139, and His172 each contribute to the 4-imidazolone-5-propanoate site. Tyr139 serves as a coordination point for N-formimidoyl-L-glutamate. Residue His237 participates in Fe(3+) binding. Zn(2+) is bound at residue His237. Gln240 is a binding site for 4-imidazolone-5-propanoate. Fe(3+) is bound at residue Asp312. Asp312 serves as a coordination point for Zn(2+). Residues Asn314 and Gly316 each contribute to the N-formimidoyl-L-glutamate site. Residue Thr317 participates in 4-imidazolone-5-propanoate binding.

This sequence belongs to the metallo-dependent hydrolases superfamily. HutI family. Requires Zn(2+) as cofactor. It depends on Fe(3+) as a cofactor.

The protein localises to the cytoplasm. It carries out the reaction 4-imidazolone-5-propanoate + H2O = N-formimidoyl-L-glutamate. It participates in amino-acid degradation; L-histidine degradation into L-glutamate; N-formimidoyl-L-glutamate from L-histidine: step 3/3. In terms of biological role, catalyzes the hydrolytic cleavage of the carbon-nitrogen bond in imidazolone-5-propanoate to yield N-formimidoyl-L-glutamate. It is the third step in the universal histidine degradation pathway. The chain is Imidazolonepropionase from Paraburkholderia phymatum (strain DSM 17167 / CIP 108236 / LMG 21445 / STM815) (Burkholderia phymatum).